The sequence spans 336 residues: Holliday junction branch migration complex subunit RuvB (336 aa).

The large ATPase domain (RuvB-L) stretch occupies residues 4–184 (ADRLISAGAT…FGIVQRLEFY (181 aa)). ATP contacts are provided by residues isoleucine 23, arginine 24, glycine 65, lysine 68, threonine 69, threonine 70, 131–133 (EDY), arginine 174, tyrosine 184, and arginine 221. Threonine 69 contacts Mg(2+). Positions 185–255 (QVPDLQHIVG…IAAQALDMLN (71 aa)) are small ATPAse domain (RuvB-S). The tract at residues 258-336 (AEGFDYMDRK…HFGITPPEMP (79 aa)) is head domain (RuvB-H). DNA contacts are provided by arginine 294, arginine 313, and arginine 318.

This sequence belongs to the RuvB family. As to quaternary structure, homohexamer. Forms an RuvA(8)-RuvB(12)-Holliday junction (HJ) complex. HJ DNA is sandwiched between 2 RuvA tetramers; dsDNA enters through RuvA and exits via RuvB. An RuvB hexamer assembles on each DNA strand where it exits the tetramer. Each RuvB hexamer is contacted by two RuvA subunits (via domain III) on 2 adjacent RuvB subunits; this complex drives branch migration. In the full resolvosome a probable DNA-RuvA(4)-RuvB(12)-RuvC(2) complex forms which resolves the HJ.

The protein resides in the cytoplasm. The enzyme catalyses ATP + H2O = ADP + phosphate + H(+). The RuvA-RuvB-RuvC complex processes Holliday junction (HJ) DNA during genetic recombination and DNA repair, while the RuvA-RuvB complex plays an important role in the rescue of blocked DNA replication forks via replication fork reversal (RFR). RuvA specifically binds to HJ cruciform DNA, conferring on it an open structure. The RuvB hexamer acts as an ATP-dependent pump, pulling dsDNA into and through the RuvAB complex. RuvB forms 2 homohexamers on either side of HJ DNA bound by 1 or 2 RuvA tetramers; 4 subunits per hexamer contact DNA at a time. Coordinated motions by a converter formed by DNA-disengaged RuvB subunits stimulates ATP hydrolysis and nucleotide exchange. Immobilization of the converter enables RuvB to convert the ATP-contained energy into a lever motion, pulling 2 nucleotides of DNA out of the RuvA tetramer per ATP hydrolyzed, thus driving DNA branch migration. The RuvB motors rotate together with the DNA substrate, which together with the progressing nucleotide cycle form the mechanistic basis for DNA recombination by continuous HJ branch migration. Branch migration allows RuvC to scan DNA until it finds its consensus sequence, where it cleaves and resolves cruciform DNA. The sequence is that of Holliday junction branch migration complex subunit RuvB from Salmonella agona (strain SL483).